The following is an 892-amino-acid chain: Alanine--tRNA ligase (892 aa).

His593, His597, Cys694, and His698 together coordinate Zn(2+).

The protein belongs to the class-II aminoacyl-tRNA synthetase family. The cofactor is Zn(2+).

The protein localises to the cytoplasm. The enzyme catalyses tRNA(Ala) + L-alanine + ATP = L-alanyl-tRNA(Ala) + AMP + diphosphate. In terms of biological role, catalyzes the attachment of alanine to tRNA(Ala) in a two-step reaction: alanine is first activated by ATP to form Ala-AMP and then transferred to the acceptor end of tRNA(Ala). Also edits incorrectly charged Ser-tRNA(Ala) and Gly-tRNA(Ala) via its editing domain. In Helicobacter hepaticus (strain ATCC 51449 / 3B1), this protein is Alanine--tRNA ligase.